We begin with the raw amino-acid sequence, 134 residues long: Cytochrome b5 (134 aa).

Ala2 carries the post-translational modification N-acetylalanine. Lys7, Lys10, and Lys19 each carry N6-acetyllysine. In terms of domain architecture, Cytochrome b5 heme-binding spans 9–85 (VKYYTLEEIQ…SKTFIIGELH (77 aa)). The heme site is built by His44 and His68. A helical transmembrane segment spans residues 109–131 (WWTNWLIPAISALFVALIYHLYT).

Belongs to the cytochrome b5 family.

The protein localises to the endoplasmic reticulum membrane. It localises to the microsome membrane. In terms of biological role, cytochrome b5 is a membrane-bound hemoprotein functioning as an electron carrier for several membrane-bound oxygenases. The chain is Cytochrome b5 (CYB5A) from Bos taurus (Bovine).